A 167-amino-acid polypeptide reads, in one-letter code: N-alpha-acetyltransferase (167 aa).

Positions 12–167 constitute an N-acetyltransferase domain; the sequence is FTLRNARMDD…EDAYLMARPL (156 aa). Tyr37 contributes to the substrate binding site. Position 88 (His88) interacts with Zn(2+). Acetyl-CoA contacts are provided by residues 92–94 and 100–105; these read IAV and RKGIAT. Glu127 is a binding site for Zn(2+). Residues Asn132 and 139–141 contribute to the acetyl-CoA site; that span reads YEK. Tyr154 is a binding site for substrate.

The protein belongs to the acetyltransferase family. ARD1 subfamily. As to quaternary structure, homodimer.

The protein localises to the cytoplasm. It carries out the reaction N-terminal L-alanyl-[protein] + acetyl-CoA = N-terminal N(alpha)-acetyl-L-alanyl-[protein] + CoA + H(+). The enzyme catalyses N-terminal L-seryl-[protein] + acetyl-CoA = N-terminal N(alpha)-acetyl-L-seryl-[protein] + CoA + H(+). The catalysed reaction is N-terminal L-methionyl-L-leucyl-[protein] + acetyl-CoA = N-terminal N(alpha)-acetyl-L-methionyl-L-leucyl-[protein] + CoA + H(+). It catalyses the reaction N-terminal L-methionyl-L-glutamyl-[protein] + acetyl-CoA = N-terminal N(alpha)-acetyl-L-methionyl-L-glutamyl-[protein] + CoA + H(+). Its function is as follows. Displays alpha (N-terminal) acetyltransferase activity. Catalyzes the covalent attachment of an acetyl moiety from acetyl-CoA to the free alpha-amino group at the N-terminus of a protein. NAT is able to acetylate the alpha-amino group of methionine, alanine and serine N-terminal residue substrates, however it has a preference for Ser-N-terminal substrates. This Saccharolobus solfataricus (strain ATCC 35092 / DSM 1617 / JCM 11322 / P2) (Sulfolobus solfataricus) protein is N-alpha-acetyltransferase.